Here is a 455-residue protein sequence, read N- to C-terminus: Chromosomal replication initiator protein DnaA 2 (455 aa).

Residues 1-95 form a domain I, interacts with DnaA modulators region; that stretch reads MLTCNDCSTW…KRSSPQIAAS (95 aa). The segment at 96–112 is domain II; sequence VTKPAVEVSEENKDFQL. Residues 113 to 328 are domain III, AAA+ region; it reads KLNGAYRFDN…GAINKLTAYC (216 aa). G157, G159, K160, and T161 together coordinate ATP. Residues 329-455 are domain IV, binds dsDNA; sequence LLFNKPLTET…IAIDSPQHFV (127 aa).

This sequence belongs to the DnaA family. Oligomerizes as a right-handed, spiral filament on DNA at oriC.

Its subcellular location is the cytoplasm. In terms of biological role, plays an essential role in the initiation and regulation of chromosomal replication. ATP-DnaA binds to the origin of replication (oriC) to initiate formation of the DNA replication initiation complex once per cell cycle. Binds the DnaA box (a 9 base pair repeat at the origin) and separates the double-stranded (ds)DNA. Forms a right-handed helical filament on oriC DNA; dsDNA binds to the exterior of the filament while single-stranded (ss)DNA is stabiized in the filament's interior. The ATP-DnaA-oriC complex binds and stabilizes one strand of the AT-rich DNA unwinding element (DUE), permitting loading of DNA polymerase. After initiation quickly degrades to an ADP-DnaA complex that is not apt for DNA replication. Binds acidic phospholipids. In Chlamydia muridarum (strain MoPn / Nigg), this protein is Chromosomal replication initiator protein DnaA 2.